The chain runs to 855 residues: Sucrose synthase 7 (855 aa).

The interval 279–758 (SIFNIVIFSI…GLQRIYECYT (480 aa)) is GT-B glycosyltransferase.

The protein belongs to the glycosyltransferase 1 family. Plant sucrose synthase subfamily. Predominantly expressed in roots, flowers and immature seeds.

It localises to the cytoplasm. It is found in the membrane. The enzyme catalyses an NDP-alpha-D-glucose + D-fructose = a ribonucleoside 5'-diphosphate + sucrose + H(+). Its function is as follows. Sucrose-cleaving enzyme that provides UDP-glucose and fructose for various metabolic pathways. The protein is Sucrose synthase 7 (SUS7) of Oryza sativa subsp. japonica (Rice).